The chain runs to 289 residues: Toxin tox21A (289 aa).

Positions 1–14 (MNLYFLFFISTILA) are cleaved as a signal peptide. A propeptide spanning residues 15-27 (AKPFNSFNKTSLI) is cleaved from the precursor. The interval 270-289 (DKDITVHENAGDPKSDSRRC) is disordered.

Contains several disulfide bonds. Posterior glands which appear to be connected with the stylet through a series of ducts.

The protein resides in the secreted. Has contracting-paralyzing activity in insect larvae. The chain is Toxin tox21A from Pyemotes tritici (Straw itch mite).